The chain runs to 485 residues: Calcium-dependent protein kinase 27 (485 aa).

A lipid anchor (N-myristoyl glycine) is attached at Gly-2. A Protein kinase domain is found at 28–290 (YILGEELGRG…AAEVLGHPWM (263 aa)). ATP contacts are provided by residues 34-42 (LGRGNFGLT) and Lys-57. The active-site Proton acceptor is Asp-156. A Phosphoserine modification is found at Ser-196. Positions 295-325 (ASDKPIDGVVLSRLKRFRDANKFKKVVLKFI) are autoinhibitory domain. EF-hand domains are found at residues 332–367 (EEIK…LGSN), 368–403 (LSKT…RYKL), 404–439 (DRDE…DGAG), and 444–474 (IKQI…ESSL). Ca(2+)-binding residues include Asp-345, Asp-347, Ser-349, Asn-351, Glu-356, Asp-381, Asp-383, Asn-385, Thr-387, Glu-392, Asp-417, Asp-419, Asp-421, His-423, Glu-428, Asp-452, Asp-454, Asp-456, Lys-458, and Glu-463.

It belongs to the protein kinase superfamily. Ser/Thr protein kinase family. CDPK subfamily.

The protein resides in the membrane. The enzyme catalyses L-seryl-[protein] + ATP = O-phospho-L-seryl-[protein] + ADP + H(+). It catalyses the reaction L-threonyl-[protein] + ATP = O-phospho-L-threonyl-[protein] + ADP + H(+). With respect to regulation, activated by calcium. Autophosphorylation may play an important role in the regulation of the kinase activity. May play a role in signal transduction pathways that involve calcium as a second messenger. In Arabidopsis thaliana (Mouse-ear cress), this protein is Calcium-dependent protein kinase 27 (CPK27).